The primary structure comprises 134 residues: Large ribosomal subunit protein bL19 (134 aa).

The tract at residues 110 to 134 (ARLHQEEGPSSAAPASTPPAAAPQA) is disordered. Over residues 125 to 134 (STPPAAAPQA) the composition is skewed to pro residues.

The protein belongs to the bacterial ribosomal protein bL19 family.

Functionally, this protein is located at the 30S-50S ribosomal subunit interface and may play a role in the structure and function of the aminoacyl-tRNA binding site. This chain is Large ribosomal subunit protein bL19, found in Anaeromyxobacter sp. (strain Fw109-5).